A 169-amino-acid polypeptide reads, in one-letter code: MRIKILLLVLPFFAFASEHGGVNYDIIERALNFLLFFGILLYFIAKPLKDLYQSRIDKIAGKLESIQEKLRASKLKKDDALKRVEEAKLNASSLVETARKEAVNLAQKVKKDAELEMANIQKSFKDQKDFEERKTTKNVVSEILNDIFASDSLKVDQKELINIILKKVG.

The helical transmembrane segment at 3–23 (IKILLLVLPFFAFASEHGGVN) threads the bilayer.

Belongs to the ATPase B chain family. As to quaternary structure, F-type ATPases have 2 components, F(1) - the catalytic core - and F(0) - the membrane proton channel. F(1) has five subunits: alpha(3), beta(3), gamma(1), delta(1), epsilon(1). F(0) has three main subunits: a(1), b(2) and c(10-14). The alpha and beta chains form an alternating ring which encloses part of the gamma chain. F(1) is attached to F(0) by a central stalk formed by the gamma and epsilon chains, while a peripheral stalk is formed by the delta and b chains.

It localises to the cell inner membrane. Functionally, f(1)F(0) ATP synthase produces ATP from ADP in the presence of a proton or sodium gradient. F-type ATPases consist of two structural domains, F(1) containing the extramembraneous catalytic core and F(0) containing the membrane proton channel, linked together by a central stalk and a peripheral stalk. During catalysis, ATP synthesis in the catalytic domain of F(1) is coupled via a rotary mechanism of the central stalk subunits to proton translocation. In terms of biological role, component of the F(0) channel, it forms part of the peripheral stalk, linking F(1) to F(0). The polypeptide is ATP synthase subunit b (Campylobacter curvus (strain 525.92)).